Reading from the N-terminus, the 589-residue chain is Multidrug transporter FLR2 (589 aa).

Residues 50-116 (KEEMKQDNQT…SSTKDASKPE (67 aa)) are disordered. Residues 56–73 (DNQTSTDSMSTSTQQETD) are compositionally biased toward low complexity. N57 carries N-linked (GlcNAc...) asparagine glycosylation. Basic and acidic residues predominate over residues 107-116 (SSTKDASKPE). N136 carries an N-linked (GlcNAc...) asparagine glycan. The next 12 helical transmembrane spans lie at 143-163 (TFVI…SSIY), 179-199 (VVGT…PIIF), 211-231 (MPLY…CALV), 234-254 (IAGL…VLAT), 275-295 (WAVG…AMVV), 301-321 (WIFW…IFFF), 378-398 (PIIL…YLFF), 417-437 (GLAF…LIIF), 455-475 (LFLI…FFFG), 480-500 (IHWI…FNLF), 516-536 (ASVF…FPLF), and 551-571 (VAWG…IPFV).

The protein belongs to the major facilitator superfamily.

The protein localises to the cell membrane. Functionally, multidrug transporter that confers resistance to 5-flucytosine (5-FC) and clotrimazole. Further confers azole drug resistance. Plays direct roles in extrusion of 5-flucytosine and clotrimazole. The chain is Multidrug transporter FLR2 from Candida glabrata (strain ATCC 2001 / BCRC 20586 / JCM 3761 / NBRC 0622 / NRRL Y-65 / CBS 138) (Yeast).